A 268-amino-acid chain; its full sequence is Protein OPG165 (268 aa).

This sequence belongs to the orthopoxvirus OPG165 family.

The sequence is that of Protein OPG165 (OPG165) from Cynomys gunnisoni (Gunnison's prairie dog).